Here is a 204-residue protein sequence, read N- to C-terminus: UPF0215 protein MTH_1316 (204 aa).

It belongs to the UPF0215 family.

The sequence is that of UPF0215 protein MTH_1316 from Methanothermobacter thermautotrophicus (strain ATCC 29096 / DSM 1053 / JCM 10044 / NBRC 100330 / Delta H) (Methanobacterium thermoautotrophicum).